The sequence spans 327 residues: UPF0065 protein in gbd 5'region (327 aa).

The segment at residues 1 to 30 (MQRRHFIARAGIAAATAALGLAAMPAQAQA) is a signal peptide (tat-type signal).

This sequence belongs to the UPF0065 (bug) family. In terms of processing, predicted to be exported by the Tat system. The position of the signal peptide cleavage has not been experimentally proven.

It localises to the periplasm. This chain is UPF0065 protein in gbd 5'region, found in Cupriavidus necator (Alcaligenes eutrophus).